A 204-amino-acid polypeptide reads, in one-letter code: MTNIKLNYHKTHFLMSAPNIKVLPEDSGIEIAFAGRSNAGKSTALNALTQQKNLARTSKIPGRTQLINLFQVEPNCKLVDLPGYGYAAVPEQMKLQWQKSLGEYLQKRECLGGLVILMDIRHPLKDLDQQMIEWAVSADLPVLLLLTKADKLSQSARSKQVKMVREAILPFQGDVQVEAFSAQNKIGIERLSEKLDQWFSPLFS.

The 175-residue stretch at 27–201 (SGIEIAFAGR…SEKLDQWFSP (175 aa)) folds into the EngB-type G domain. GTP-binding positions include 35–42 (GRSNAGKS), 62–66 (GRTQL), 80–83 (DLPG), 147–150 (TKAD), and 180–182 (FSA). Positions 42 and 64 each coordinate Mg(2+).

It belongs to the TRAFAC class TrmE-Era-EngA-EngB-Septin-like GTPase superfamily. EngB GTPase family. Mg(2+) serves as cofactor.

Necessary for normal cell division and for the maintenance of normal septation. The sequence is that of Probable GTP-binding protein EngB from Histophilus somni (strain 129Pt) (Haemophilus somnus).